Here is a 99-residue protein sequence, read N- to C-terminus: HssA/B-like protein 41 (99 aa).

The segment at 1–29 (MTLFSSISSISNPMTSSKSSISSFGSGTS) is disordered.

This sequence belongs to the hssA/B family.

This is HssA/B-like protein 41 (hssl41) from Dictyostelium discoideum (Social amoeba).